The sequence spans 371 residues: Zygote-specific protein 3 (371 aa).

The first 24 residues, 1-24 (MLRSAGRVAAVALLALFALGCVSA), serve as a signal peptide directing secretion. An N-linked (GlcNAc...) asparagine glycan is attached at Asn-41. 2 ANK repeats span residues 62–91 (TRRLPLVEAARSRDARLVGALLDQGALARV) and 94–123 (GTTTPLHLSMQGGSAAIVKLLLAHGADPNA). 2 WW domains span residues 159–187 (EPGAWIREERDGQSYYWKPANGESRWAVP) and 283–313 (YATPWRELVDEASGAPFFFNVETGDTTWELP).

It localises to the endoplasmic reticulum lumen. Functionally, may have a role in the remodeling of the endoplasmic reticulum upon zygote formation. The sequence is that of Zygote-specific protein 3 (ZYS3) from Chlamydomonas reinhardtii (Chlamydomonas smithii).